The chain runs to 322 residues: uncharacterized protein (322 aa).

It belongs to the glycosyltransferase 2 family.

This is an uncharacterized protein from Nostoc sp. (strain PCC 7120 / SAG 25.82 / UTEX 2576).